A 296-amino-acid polypeptide reads, in one-letter code: Phosphatidylglycerol--prolipoprotein diacylglyceryl transferase (296 aa).

7 helical membrane-spanning segments follow: residues 17-37 (LAVRWYGLMYLVGFIAAIVVG), 59-79 (MMFYGVLGTVLGGRLGYVLFY), 97-117 (GGMSFHGGFLGVTLAMVLFAW), 129-149 (FVAPMVPAGLAAGRLGNFING), 203-223 (PSQLYEIALEGIALFFVLFFF), 230-250 (LGAVSALFLIGYGLARFTVEF), and 265-285 (LSMGQWLSLPMILAGIALLVW). Position 142 (Arg-142) interacts with a 1,2-diacyl-sn-glycero-3-phospho-(1'-sn-glycerol).

The protein belongs to the Lgt family.

It localises to the cell inner membrane. The enzyme catalyses L-cysteinyl-[prolipoprotein] + a 1,2-diacyl-sn-glycero-3-phospho-(1'-sn-glycerol) = an S-1,2-diacyl-sn-glyceryl-L-cysteinyl-[prolipoprotein] + sn-glycerol 1-phosphate + H(+). The protein operates within protein modification; lipoprotein biosynthesis (diacylglyceryl transfer). Functionally, catalyzes the transfer of the diacylglyceryl group from phosphatidylglycerol to the sulfhydryl group of the N-terminal cysteine of a prolipoprotein, the first step in the formation of mature lipoproteins. This Burkholderia ambifaria (strain MC40-6) protein is Phosphatidylglycerol--prolipoprotein diacylglyceryl transferase.